A 209-amino-acid polypeptide reads, in one-letter code: Orotate phosphoribosyltransferase (209 aa).

5-phospho-alpha-D-ribose 1-diphosphate is bound by residues arginine 96, lysine 100, histidine 102, and 122–130; that span reads EDLISTGGS. Serine 126 is an orotate binding site.

Belongs to the purine/pyrimidine phosphoribosyltransferase family. PyrE subfamily. In terms of assembly, homodimer. It depends on Mg(2+) as a cofactor.

The enzyme catalyses orotidine 5'-phosphate + diphosphate = orotate + 5-phospho-alpha-D-ribose 1-diphosphate. It participates in pyrimidine metabolism; UMP biosynthesis via de novo pathway; UMP from orotate: step 1/2. Its function is as follows. Catalyzes the transfer of a ribosyl phosphate group from 5-phosphoribose 1-diphosphate to orotate, leading to the formation of orotidine monophosphate (OMP). The polypeptide is Orotate phosphoribosyltransferase (Streptococcus mutans serotype c (strain ATCC 700610 / UA159)).